Consider the following 459-residue polypeptide: Argininosuccinate lyase (459 aa).

The protein belongs to the lyase 1 family. Argininosuccinate lyase subfamily.

It is found in the cytoplasm. The enzyme catalyses 2-(N(omega)-L-arginino)succinate = fumarate + L-arginine. It participates in amino-acid biosynthesis; L-arginine biosynthesis; L-arginine from L-ornithine and carbamoyl phosphate: step 3/3. The chain is Argininosuccinate lyase from Oceanobacillus iheyensis (strain DSM 14371 / CIP 107618 / JCM 11309 / KCTC 3954 / HTE831).